We begin with the raw amino-acid sequence, 157 residues long: Protein Smg homolog (157 aa).

This sequence belongs to the Smg family.

The chain is Protein Smg homolog from Shewanella loihica (strain ATCC BAA-1088 / PV-4).